The sequence spans 353 residues: Abasic site processing protein HMCES (353 aa).

The active-site Nucleophile is the C2. At C2 the chain carries Thiazolidine linkage to a ring-opened DNA abasic site. The active site involves E127. Residues K148 and K151 each participate in a glycyl lysine isopeptide (Lys-Gly) (interchain with G-Cter in SUMO2) cross-link. S160 carries the phosphoserine modification. Glycyl lysine isopeptide (Lys-Gly) (interchain with G-Cter in SUMO2) cross-links involve residues K274 and K275. A disordered region spans residues 292–353; it reads TKSPKKEVPD…DEPMAKKPNS (62 aa). The residue at position 294 (S294) is a Phosphoserine. The segment covering 295 to 307 has biased composition (basic and acidic residues); sequence PKKEVPDSPKKDA. K305 is covalently cross-linked (Glycyl lysine isopeptide (Lys-Gly) (interchain with G-Cter in SUMO2)). S321 bears the Phosphoserine mark. The short motif at 332 to 338 is the PIP-box element; it reads SFLDRWL. The span at 336–353 shows a compositional bias: basic and acidic residues; it reads RWLKQEKEDEPMAKKPNS. Residues K339 and K342 each participate in a glycyl lysine isopeptide (Lys-Gly) (interchain with G-Cter in SUMO2) cross-link.

It belongs to the SOS response-associated peptidase family. In terms of assembly, interacts (via PIP-box motif) with PCNA. Expressed in embryonic stem cells.

The protein localises to the chromosome. With respect to regulation, formation and reversal of DNA-protein cross-link depends on DNA context. Catalyzes formation of the thiazolidine linkage in presence of abasic sites in single-stranded DNA. Mediates the reversal of the thiazolidine cross-link in presence of double stranded DNA. Functionally, sensor of abasic sites in single-stranded DNA (ssDNA) required to preserve genome integrity by promoting error-free repair of abasic sites. Acts as an enzyme that recognizes and binds abasic sites in ssDNA at replication forks and chemically modifies the lesion by forming a covalent cross-link with DNA: forms a stable thiazolidine linkage between a ring-opened abasic site and the alpha-amino and sulfhydryl substituents of its N-terminal catalytic cysteine residue. Promotes error-free repair by protecting abasic sites from translesion synthesis (TLS) polymerases and endonucleases that are error-prone and would generate mutations and double-strand breaks. The HMCES DNA-protein cross-link is then either reversed or degraded. HMCES is able to catalyze the reversal of its thiazolidine cross-link and cycle between a cross-link and a non-cross-linked state depending on DNA context: mediates self-reversal of the thiazolidine cross-link in double stranded DNA, allowing APEX1 to initiate downstream repair of abasic sites. The HMCES DNA-protein cross-link can also be degraded by the SPRTN metalloprotease following unfolding by the BRIP1/FANCJ helicase. Has preference for ssDNA, but can also accommodate double-stranded DNA with 3' or 5' overhang (dsDNA), and dsDNA-ssDNA 3' junction. Plays a protective role during somatic hypermutation of immunoglobulin genes in B-cells: acts via its ability to form covalent cross-links with abasic sites, thereby limiting the accumulation of deletions in somatic hypermutation target regions. Also involved in class switch recombination (CSR) in B-cells independently of the formation of a DNA-protein cross-link: acts by binding and protecting ssDNA overhangs to promote DNA double-strand break repair through the microhomology-mediated alternative-end-joining (Alt-EJ) pathway. Acts as a protease: mediates autocatalytic processing of its N-terminal methionine in order to expose the catalytic cysteine. This Mus musculus (Mouse) protein is Abasic site processing protein HMCES.